Here is a 494-residue protein sequence, read N- to C-terminus: tRNA-2-methylthio-N(6)-dimethylallyladenosine synthase (494 aa).

Residues 12–131 (PTYRVVTYGC…LPVLLKRARH (120 aa)) form the MTTase N-terminal domain. [4Fe-4S] cluster-binding residues include cysteine 21, cysteine 60, cysteine 94, cysteine 168, cysteine 172, and cysteine 175. The Radical SAM core domain maps to 154–385 (RDSAYSAWVS…ELVDDIAWQE (232 aa)). Residues 387-457 (KAQVGRAVEV…PHHLVADGGL (71 aa)) enclose the TRAM domain.

The protein belongs to the methylthiotransferase family. MiaB subfamily. As to quaternary structure, monomer. [4Fe-4S] cluster is required as a cofactor.

It is found in the cytoplasm. The enzyme catalyses N(6)-dimethylallyladenosine(37) in tRNA + (sulfur carrier)-SH + AH2 + 2 S-adenosyl-L-methionine = 2-methylsulfanyl-N(6)-dimethylallyladenosine(37) in tRNA + (sulfur carrier)-H + 5'-deoxyadenosine + L-methionine + A + S-adenosyl-L-homocysteine + 2 H(+). Catalyzes the methylthiolation of N6-(dimethylallyl)adenosine (i(6)A), leading to the formation of 2-methylthio-N6-(dimethylallyl)adenosine (ms(2)i(6)A) at position 37 in tRNAs that read codons beginning with uridine. The protein is tRNA-2-methylthio-N(6)-dimethylallyladenosine synthase of Cutibacterium acnes (strain DSM 16379 / KPA171202) (Propionibacterium acnes).